The primary structure comprises 581 residues: Frizzled-8 (581 aa).

Residues Met-1–Ala-23 form the signal peptide. In terms of domain architecture, FZ spans Lys-24 to Tyr-144. The Extracellular portion of the chain corresponds to Lys-24–Trp-239. Intrachain disulfides connect Cys-28/Cys-89, Cys-36/Cys-82, Cys-73/Cys-111, Cys-100/Cys-141, and Cys-104/Cys-128. An N-linked (GlcNAc...) asparagine glycan is attached at Asn-42. Gln-64–Ile-71 contacts hexadecanoate. Residues Ile-88 to Tyr-93 form a wnt-binding region. The wnt-binding stretch occupies residues Leu-140 to Asn-146. An N-linked (GlcNAc...) asparagine glycan is attached at Asn-146. The disordered stretch occupies residues Thr-151–Ser-189. Residues His-157–Arg-166 are compositionally biased toward pro residues. Residues Ile-240–Ile-260 form a helical membrane-spanning segment. Residues Asp-261–Pro-271 are Cytoplasmic-facing. The chain crosses the membrane as a helical span at residues Ile-272–Ala-292. Residues Gly-293–Cys-320 are Extracellular-facing. Residues Thr-321 to Leu-341 form a helical membrane-spanning segment. Residues Ser-342–Ser-377 are Cytoplasmic-facing. Residues Ile-378–Gly-398 form a helical membrane-spanning segment. Over Asn-399 to Gly-407 the chain is Extracellular. The helical transmembrane segment at Phe-408 to Phe-428 threads the bilayer. At Val-429 to Arg-454 the chain is on the cytoplasmic side. Residues Ile-455–Tyr-475 traverse the membrane as a helical segment. Topologically, residues Glu-476–Ala-505 are extracellular. The chain crosses the membrane as a helical span at residues Val-506–Trp-526. Over Ser-527 to Val-581 the chain is Cytoplasmic. Residues Lys-529–Trp-534 carry the Lys-Thr-X-X-X-Trp motif, mediates interaction with the PDZ domain of Dvl family members motif. The PDZ-binding signature appears at Ser-579 to Val-581.

It belongs to the G-protein coupled receptor Fz/Smo family. Interacts with lypd6 and the interaction is strongly enhanced by wnt3a.

Its subcellular location is the membrane. The protein localises to the cell membrane. Functionally, receptor for Wnt proteins. Most of frizzled receptors are coupled to the beta-catenin canonical signaling pathway, which leads to the activation of disheveled proteins, inhibition of GSK-3 kinase, nuclear accumulation of beta-catenin and activation of Wnt target genes. A second signaling pathway involving PKC and calcium fluxes has been seen for some family members, but it is not yet clear if it represents a distinct pathway or if it can be integrated in the canonical pathway, as PKC seems to be required for Wnt-mediated inactivation of GSK-3 kinase. Both pathways seem to involve interactions with G-proteins. May be involved in transduction and intercellular transmission of polarity information during tissue morphogenesis and/or in differentiated tissues. Activation by Wnt8, Wnt5A or Wnt3A induces expression of beta-catenin target genes. Displays an axis-inducing activity. The chain is Frizzled-8 (fzd8) from Xenopus laevis (African clawed frog).